A 55-amino-acid polypeptide reads, in one-letter code: Antiviral protein GAP-31 (55 aa).

Positions 29-55 (KPEGNSHGIPSLRKSSDDPGSSFVVAG) are disordered.

The protein belongs to the ribosome-inactivating protein family. Type 1 RIP subfamily.

It catalyses the reaction Endohydrolysis of the N-glycosidic bond at one specific adenosine on the 28S rRNA.. Its function is as follows. Single-chain ribosome-inactivating protein, possessing high antiviral potency and low toxicity to normal cells in culture and to intact animals. Capable of inhibiting HIV-1 infection and replication. The sequence is that of Antiviral protein GAP-31 from Suregada multiflora (False lime).